The sequence spans 473 residues: uncharacterized protein (473 aa).

Residues 1 to 19 (MIRAFLVFPYLYILVQSNG) form the signal peptide.

This is an uncharacterized protein from Methanocaldococcus jannaschii (strain ATCC 43067 / DSM 2661 / JAL-1 / JCM 10045 / NBRC 100440) (Methanococcus jannaschii).